The sequence spans 120 residues: UPF0102 protein HSM_1206 (120 aa).

This sequence belongs to the UPF0102 family.

The polypeptide is UPF0102 protein HSM_1206 (Histophilus somni (strain 2336) (Haemophilus somnus)).